We begin with the raw amino-acid sequence, 1205 residues long: A disintegrin and metalloproteinase with thrombospondin motifs 2 (1205 aa).

A signal peptide spans 1 to 28; sequence MDPPAGAAGRLLCPALLLLLLLPLPADA. Positions 29 to 253 are excised as a propeptide; the sequence is RLAAAAADPP…VNSSRRRMRR (225 aa). N-linked (GlcNAc...) asparagine glycosylation is found at asparagine 104 and asparagine 245. The Peptidase M12B domain occupies 260–464; sequence YNIEVLLGVD…HSYDCLRDDP (205 aa). Disulfide bonds link cysteine 337–cysteine 386, cysteine 380–cysteine 459, cysteine 419–cysteine 445, cysteine 486–cysteine 511, cysteine 497–cysteine 520, cysteine 506–cysteine 539, cysteine 533–cysteine 544, cysteine 567–cysteine 604, cysteine 571–cysteine 609, and cysteine 582–cysteine 594. Zn(2+) is bound at residue histidine 402. The active site involves glutamate 403. 2 residues coordinate Zn(2+): histidine 406 and histidine 412. In terms of domain architecture, Disintegrin spans 474–554; that stretch reads QLPGLHYSMN…IWLTPDILKR (81 aa). The TSP type-1 1 domain occupies 555–610; that stretch reads DGNWGAWSPFGSCSRTCGTGVKFRTRQCDNPHPANGGRTCSGLAYDFQLCNSQDCP. The short motif at 685-687 is the Cell attachment site element; sequence RGD. A spacer region spans residues 717–845; it reads KVVKGTFSRS…NVDDNNVLED (129 aa). 3 TSP type-1 domains span residues 848 to 906, 908 to 968, and 969 to 1023; these read VGYE…NPQE, SQPV…NREL, and CPGR…GPCP. N-linked (GlcNAc...) asparagine glycans are attached at residues asparagine 942, asparagine 943, and asparagine 987. Disulfide bonds link cysteine 981/cysteine 1017, cysteine 985/cysteine 1022, and cysteine 996/cysteine 1006. N-linked (GlcNAc...) asparagine glycosylation is present at asparagine 1025. The 39-residue stretch at 1053 to 1091 folds into the PLAC domain; sequence SKGRCQGDKSVFCRMEVLSRYCSIPGYNKLCCKSCNPHD. Asparagine 1092, asparagine 1139, and asparagine 1144 each carry an N-linked (GlcNAc...) asparagine glycan. A disordered region spans residues 1163 to 1184; the sequence is GLEDEVQPPNLIPRRPSPYEKT.

In terms of assembly, may belong to a multimeric complex. Binds specifically to collagen type XIV. Zn(2+) serves as cofactor. In terms of processing, the N-terminus is blocked. The precursor is cleaved by a furin endopeptidase. Post-translationally, glycosylated. Can be O-fucosylated by POFUT2 on a serine or a threonine residue found within the consensus sequence C1-X(2)-(S/T)-C2-G of the TSP type-1 repeat domains where C1 and C2 are the first and second cysteine residue of the repeat, respectively. Fucosylated repeats can then be further glycosylated by the addition of a beta-1,3-glucose residue by the glucosyltransferase, B3GALTL. Fucosylation mediates the efficient secretion of ADAMTS family members. Can also be C-glycosylated with one or two mannose molecules on tryptophan residues within the consensus sequence W-X-X-W of the TPRs, and N-glycosylated. These other glycosylations can also facilitate secretion. In terms of tissue distribution, enzymatic activity is detected at high level in all type I collagen-rich tissues such as skin, bones, tendons and aorta and at low level in brain and thymus. The mRNA levels were disproportionately high in heart, liver, retina and muscle.

Its subcellular location is the secreted. The protein localises to the extracellular space. It localises to the extracellular matrix. It catalyses the reaction Cleaves the N-propeptide of collagen chain alpha1(I) at Pro-|-Gln and of alpha1(II) and alpha2(I) at Ala-|-Gln.. Functionally, cleaves the propeptides of type I and II collagen prior to fibril assembly. Does not act on type III collagen. Cleaves lysyl oxidase LOX at a site downstream of its propeptide cleavage site to produce a short LOX form with reduced collagen-binding activity. This is A disintegrin and metalloproteinase with thrombospondin motifs 2 (ADAMTS2) from Bos taurus (Bovine).